The sequence spans 295 residues: Alpha-1A adrenergic receptor (295 aa).

The Extracellular segment spans residues 1–27; the sequence is MVFLSGNASDSSNCTHPPAPVNISKAI. N-linked (GlcNAc...) asparagine glycans are attached at residues Asn-7, Asn-13, and Asn-22. The helical transmembrane segment at 28 to 51 threads the bilayer; it reads LLGVILGGLIIFGVLGNILVILSV. Over 52 to 64 the chain is Cytoplasmic; sequence ACHRHLHSVTHYY. A helical transmembrane segment spans residues 65–88; it reads IVNLAVADLLLTSTVLPFSAIFEI. Over 89–99 the chain is Extracellular; the sequence is LGYWAFGRVFC. An intrachain disulfide couples Cys-99 to Cys-176. A helical membrane pass occupies residues 100-122; sequence NIWAAVDVLCCTASIMGLCIISI. The Cytoplasmic portion of the chain corresponds to 123–143; it reads DRYIGVSYPLRYPTIVTQKRG. A helical transmembrane segment spans residues 144–167; it reads LMALLCVWALSLVISIGPLFGWRQ. The Extracellular portion of the chain corresponds to 168-181; sequence PAPEDETICQITEE. Residues 182 to 205 form a helical membrane-spanning segment; that stretch reads PGYVLFSALGSFYVPLTIILVMYC. Residues 206-273 lie on the Cytoplasmic side of the membrane; sequence RVYVVAKRES…FSREKKAAKT (68 aa). Position 215 is a phosphoserine; by PKA (Ser-215). Residues 274-295 traverse the membrane as a helical segment; the sequence is LGIVVGCFVLCWLPFFLVMPIG.

It belongs to the G-protein coupled receptor 1 family. Adrenergic receptor subfamily. ADRA1A sub-subfamily. As to quaternary structure, homo- and heterooligomer. Heterooligomerizes with ADRA1B homooligomers in cardiac myocytes. Interacts with CAVIN4.

The protein resides in the nucleus membrane. It is found in the cell membrane. It localises to the cytoplasm. The protein localises to the membrane. Its subcellular location is the caveola. In terms of biological role, this alpha-adrenergic receptor mediates its action by association with G proteins that activate a phosphatidylinositol-calcium second messenger system. Its effect is mediated by G(q) and G(11) proteins. Nuclear ADRA1A-ADRA1B heterooligomers regulate phenylephrine (PE)-stimulated ERK signaling in cardiac myocytes. The protein is Alpha-1A adrenergic receptor (ADRA1A) of Canis lupus familiaris (Dog).